Reading from the N-terminus, the 154-residue chain is Heat shock protein beta-3 (154 aa).

The interval 48 to 71 (ARGAGTPQALAEDSASTEKPPGEG) is disordered. Residues 57-154 (LAEDSASTEK…VEVKDSLGTK (98 aa)) form the sHSP domain.

It belongs to the small heat shock protein (HSP20) family.

The protein resides in the cytoplasm. It is found in the nucleus. Functionally, inhibitor of actin polymerization. The chain is Heat shock protein beta-3 (Hspb3) from Mus musculus (Mouse).